Consider the following 517-residue polypeptide: ATP synthase subunit alpha 2 (517 aa).

Gly173 to Thr180 lines the ATP pocket.

Belongs to the ATPase alpha/beta chains family. F-type ATPases have 2 components, CF(1) - the catalytic core - and CF(0) - the membrane proton channel. CF(1) has five subunits: alpha(3), beta(3), gamma(1), delta(1), epsilon(1). CF(0) has three main subunits: a(1), b(2) and c(9-12). The alpha and beta chains form an alternating ring which encloses part of the gamma chain. CF(1) is attached to CF(0) by a central stalk formed by the gamma and epsilon chains, while a peripheral stalk is formed by the delta and b chains.

Its subcellular location is the cell inner membrane. The enzyme catalyses ATP + H2O + 4 H(+)(in) = ADP + phosphate + 5 H(+)(out). In terms of biological role, produces ATP from ADP in the presence of a proton gradient across the membrane. The alpha chain is a regulatory subunit. This is ATP synthase subunit alpha 2 from Legionella pneumophila subsp. pneumophila (strain Philadelphia 1 / ATCC 33152 / DSM 7513).